The chain runs to 347 residues: Dihydroorotase (347 aa).

2 residues coordinate Zn(2+): histidine 13 and histidine 15. Residues 15-17 and asparagine 41 each bind substrate; that span reads HLR. Zn(2+) contacts are provided by lysine 99, histidine 136, and histidine 174. An N6-carboxylysine modification is found at lysine 99. Histidine 136 contributes to the substrate binding site. Position 219 (leucine 219) interacts with substrate. Aspartate 247 serves as a coordination point for Zn(2+). Aspartate 247 is a catalytic residue. Substrate contacts are provided by histidine 251 and alanine 263.

It belongs to the metallo-dependent hydrolases superfamily. DHOase family. Class II DHOase subfamily. In terms of assembly, homodimer. The cofactor is Zn(2+).

The catalysed reaction is (S)-dihydroorotate + H2O = N-carbamoyl-L-aspartate + H(+). It participates in pyrimidine metabolism; UMP biosynthesis via de novo pathway; (S)-dihydroorotate from bicarbonate: step 3/3. Catalyzes the reversible cyclization of carbamoyl aspartate to dihydroorotate. In Rhizobium meliloti (strain 1021) (Ensifer meliloti), this protein is Dihydroorotase.